Here is a 1004-residue protein sequence, read N- to C-terminus: 2-oxoglutarate dehydrogenase E1 component (1004 aa).

This sequence belongs to the alpha-ketoglutarate dehydrogenase family. As to quaternary structure, homodimer. Part of the 2-oxoglutarate dehydrogenase (OGDH) complex composed of E1 (2-oxoglutarate dehydrogenase), E2 (dihydrolipoamide succinyltransferase) and E3 (dihydrolipoamide dehydrogenase); the complex contains multiple copies of the three enzymatic components (E1, E2 and E3). Thiamine diphosphate is required as a cofactor.

It carries out the reaction N(6)-[(R)-lipoyl]-L-lysyl-[protein] + 2-oxoglutarate + H(+) = N(6)-[(R)-S(8)-succinyldihydrolipoyl]-L-lysyl-[protein] + CO2. E1 component of the 2-oxoglutarate dehydrogenase (OGDH) complex which catalyzes the decarboxylation of 2-oxoglutarate, the first step in the conversion of 2-oxoglutarate to succinyl-CoA and CO(2). In Brucella suis (strain ATCC 23445 / NCTC 10510), this protein is 2-oxoglutarate dehydrogenase E1 component.